The chain runs to 724 residues: Catalase-peroxidase (724 aa).

The segment at residues 96-225 (WHAAGTYRVA…LAAVMMGLIY (130 aa)) is a cross-link (tryptophyl-tyrosyl-methioninium (Trp-Tyr) (with M-251)). Catalysis depends on His-97, which acts as the Proton acceptor. A cross-link (tryptophyl-tyrosyl-methioninium (Tyr-Met) (with W-96)) is located at residues 225–251 (YVNPEGVDGNPDPLRTAEDVRITFERM). His-266 lines the heme b pocket.

Belongs to the peroxidase family. Peroxidase/catalase subfamily. In terms of assembly, homodimer or homotetramer. Heme b serves as cofactor. In terms of processing, formation of the three residue Trp-Tyr-Met cross-link is important for the catalase, but not the peroxidase activity of the enzyme.

It catalyses the reaction H2O2 + AH2 = A + 2 H2O. It carries out the reaction 2 H2O2 = O2 + 2 H2O. Bifunctional enzyme with both catalase and broad-spectrum peroxidase activity. This chain is Catalase-peroxidase, found in Halorhodospira halophila (strain DSM 244 / SL1) (Ectothiorhodospira halophila (strain DSM 244 / SL1)).